Reading from the N-terminus, the 159-residue chain is Ribosomal RNA large subunit methyltransferase H (159 aa).

S-adenosyl-L-methionine is bound by residues Gly108 and Phe127–Phe132.

The protein belongs to the RNA methyltransferase RlmH family. Homodimer.

Its subcellular location is the cytoplasm. It carries out the reaction pseudouridine(1915) in 23S rRNA + S-adenosyl-L-methionine = N(3)-methylpseudouridine(1915) in 23S rRNA + S-adenosyl-L-homocysteine + H(+). In terms of biological role, specifically methylates the pseudouridine at position 1915 (m3Psi1915) in 23S rRNA. The sequence is that of Ribosomal RNA large subunit methyltransferase H from Magnetococcus marinus (strain ATCC BAA-1437 / JCM 17883 / MC-1).